The primary structure comprises 147 residues: 3-dehydroquinate dehydratase 2 (147 aa).

The active-site Proton acceptor is Tyr-23. Positions 74, 80, and 87 each coordinate substrate. The Proton donor role is filled by His-100. Substrate is bound by residues 101 to 102 (IS) and Arg-111.

This sequence belongs to the type-II 3-dehydroquinase family. In terms of assembly, homododecamer.

It catalyses the reaction 3-dehydroquinate = 3-dehydroshikimate + H2O. The protein operates within metabolic intermediate biosynthesis; chorismate biosynthesis; chorismate from D-erythrose 4-phosphate and phosphoenolpyruvate: step 3/7. Its function is as follows. Catalyzes a trans-dehydration via an enolate intermediate. This chain is 3-dehydroquinate dehydratase 2 (aroQ2), found in Agrobacterium fabrum (strain C58 / ATCC 33970) (Agrobacterium tumefaciens (strain C58)).